Reading from the N-terminus, the 362-residue chain is 3-dehydroquinate synthase (362 aa).

NAD(+) contacts are provided by residues 71–76 (DGEQYK), 105–109 (GVVGD), 129–130 (TT), lysine 142, lysine 151, and 169–172 (CLKT). Residues glutamate 184, histidine 248, and histidine 265 each contribute to the Zn(2+) site.

The protein belongs to the sugar phosphate cyclases superfamily. Dehydroquinate synthase family. Requires Co(2+) as cofactor. It depends on Zn(2+) as a cofactor. The cofactor is NAD(+).

Its subcellular location is the cytoplasm. The enzyme catalyses 7-phospho-2-dehydro-3-deoxy-D-arabino-heptonate = 3-dehydroquinate + phosphate. The protein operates within metabolic intermediate biosynthesis; chorismate biosynthesis; chorismate from D-erythrose 4-phosphate and phosphoenolpyruvate: step 2/7. Catalyzes the conversion of 3-deoxy-D-arabino-heptulosonate 7-phosphate (DAHP) to dehydroquinate (DHQ). The sequence is that of 3-dehydroquinate synthase from Yersinia pseudotuberculosis serotype O:1b (strain IP 31758).